Reading from the N-terminus, the 240-residue chain is CD302 antigen (240 aa).

Positions 40-160 (FQDSCYIFLQ…CEVSSVEGTL (121 aa)) constitute a C-type lectin domain. The N-linked (GlcNAc...) asparagine glycan is linked to N117. A disulfide bond links C136 and C151. A helical membrane pass occupies residues 177–197 (ILISALVIASTVILTVLGAVI). At 198-240 (WFLYKRNLDSGFTTVFSTAPQSPFNDDCVLVVAEENEYAVQFD) the chain is on the cytoplasmic side.

Its subcellular location is the membrane. The protein resides in the cell projection. It is found in the filopodium. It localises to the cytoplasm. The protein localises to the cell cortex. Its function is as follows. Potential multifunctional C-type lectin receptor that may play roles in endocytosis and phagocytosis as well as in cell adhesion and migration. In Sus scrofa (Pig), this protein is CD302 antigen.